The chain runs to 457 residues: Multidrug resistance protein MdtK (457 aa).

The next 12 membrane-spanning stretches (helical) occupy residues Leu11 to Val31, Ile53 to Ala73, Trp93 to Ile113, Ala127 to Ala147, Gly160 to Tyr180, Leu188 to Met208, Leu243 to Val263, Ile276 to Thr296, Ala314 to Val334, Val350 to Ile370, Ile387 to Ala407, and Pro418 to Leu438.

This sequence belongs to the multi antimicrobial extrusion (MATE) (TC 2.A.66.1) family. MdtK subfamily.

The protein resides in the cell inner membrane. Functionally, multidrug efflux pump that functions probably as a Na(+)/drug antiporter. This is Multidrug resistance protein MdtK from Salmonella heidelberg (strain SL476).